Consider the following 72-residue polypeptide: Male-specific sperm protein Mst84Dd (72 aa).

It belongs to the MST(3)CGP family. Testis.

The protein is Male-specific sperm protein Mst84Dd (Mst84Dd) of Drosophila melanogaster (Fruit fly).